The primary structure comprises 156 residues: MGSLRGLRLVAGSCFRSCERDAFSSLRLTRNSDLKRTNGFCSKPQESPKPPDQHTYSHRVPLHKPTDWEKKILIWSGRFKKEDEIPETVSFEMLDAAKNKVRVKISYVMIALTVAGCVLMVIEGKKAARRNETLTSLNLEKKARLREEAAMKAKTE.

A disordered region spans residues 37-57 (TNGFCSKPQESPKPPDQHTYS). A required for proapoptotic activity region spans residues 78 to 104 (RFKKEDEIPETVSFEMLDAAKNKVRVK). Residues 105 to 122 (ISYVMIALTVAGCVLMVI) form a helical membrane-spanning segment.

The protein belongs to the UPF0389 family. As to quaternary structure, interacts with HSP90AB1; HSP90AB1 is essential for FAM162A mitochondrial localization and pro-apoptotic activity. Interacts with VDAC2; the interaction is probably involved in inducing mitochondrial permeability transition.

It localises to the mitochondrion membrane. Its function is as follows. Proposed to be involved in regulation of apoptosis; the exact mechanism may differ between cell types/tissues. May be involved in hypoxia-induced cell death of transformed cells implicating cytochrome C release and caspase activation (such as CASP9) and inducing mitochondrial permeability transition. May be involved in hypoxia-induced cell death of neuronal cells probably by promoting release of AIFM1 from mitochondria to cytoplasm and its translocation to the nucleus; however, the involvement of caspases has been reported conflictingly. The chain is Protein FAM162A (FAM162A) from Bos taurus (Bovine).